Reading from the N-terminus, the 527-residue chain is GMP synthase [glutamine-hydrolyzing] (527 aa).

The Glutamine amidotransferase type-1 domain maps to 19 to 212 (KIIVLDYGSQ…AFSICGAKGD (194 aa)). Cys96 serves as the catalytic Nucleophile. Residues His186 and Glu188 contribute to the active site. The 190-residue stretch at 213–402 (WSMANFVDMQ…LGMPDEVVWR (190 aa)) folds into the GMPS ATP-PPase domain. 240–246 (SGGVDSS) provides a ligand contact to ATP.

In terms of assembly, homodimer.

The enzyme catalyses XMP + L-glutamine + ATP + H2O = GMP + L-glutamate + AMP + diphosphate + 2 H(+). Its pathway is purine metabolism; GMP biosynthesis; GMP from XMP (L-Gln route): step 1/1. In terms of biological role, catalyzes the synthesis of GMP from XMP. This chain is GMP synthase [glutamine-hydrolyzing], found in Streptococcus thermophilus (strain ATCC BAA-250 / LMG 18311).